Consider the following 339-residue polypeptide: Protein-glutamate methylesterase/protein-glutamine glutaminase (339 aa).

The Response regulatory domain maps to 2-119 (RIGVVNDMPM…EGNASSQSAR (118 aa)). Position 53 is a 4-aspartylphosphate (aspartate 53). Residues 149–338 (PTPRRLIAIG…SRIIEACERS (190 aa)) enclose the CheB-type methylesterase domain. Catalysis depends on residues serine 160, histidine 187, and aspartate 280.

Belongs to the CheB family. Post-translationally, phosphorylated by CheA. Phosphorylation of the N-terminal regulatory domain activates the methylesterase activity.

Its subcellular location is the cytoplasm. The enzyme catalyses [protein]-L-glutamate 5-O-methyl ester + H2O = L-glutamyl-[protein] + methanol + H(+). The catalysed reaction is L-glutaminyl-[protein] + H2O = L-glutamyl-[protein] + NH4(+). Its function is as follows. Involved in chemotaxis. Part of a chemotaxis signal transduction system that modulates chemotaxis in response to various stimuli. Catalyzes the demethylation of specific methylglutamate residues introduced into the chemoreceptors (methyl-accepting chemotaxis proteins or MCP) by CheR. Also mediates the irreversible deamidation of specific glutamine residues to glutamic acid. The polypeptide is Protein-glutamate methylesterase/protein-glutamine glutaminase (Mesorhizobium japonicum (strain LMG 29417 / CECT 9101 / MAFF 303099) (Mesorhizobium loti (strain MAFF 303099))).